The primary structure comprises 333 residues: MGVALREVLTEYKHPRTWETLAGTAAIDGNNALYQFLSIIRQPDGTPLMNSEGRITSHLSGVFFRTLRFLEKGIRPVYIFDGKPPALKQETIESRREVRREAGVQWEAALARGDQEEAYKQARASSRVTPEIIATSKELLTLMGVPCVQAPSEGEAQAASMAASGAVTYAVSQDYDSLLFGAPLLVRNLTVSSKRRVQGRTIAVQPESIRLDEVLGGLGITREQLIEAGILIGTDFNPGIRGVGPKTALKIVKKDGFADMIAEKLPDFDPSPILQFFRSPPVIANLSLDWQPPDQAGIEDLLCGEYGFATERVRTALQKISGPPGQKTLDRWF.

The interval 1–99 is N-domain; the sequence is MGVALREVLT…ETIESRREVR (99 aa). Residues Asp-28, Asp-81, Glu-153, Glu-155, Asp-174, Asp-176, and Asp-235 each coordinate Mg(2+). The tract at residues 117 to 256 is I-domain; sequence EAYKQARASS…TALKIVKKDG (140 aa). Residues 325-333 form an interaction with PCNA region; sequence GQKTLDRWF.

Belongs to the XPG/RAD2 endonuclease family. FEN1 subfamily. As to quaternary structure, interacts with PCNA. PCNA stimulates the nuclease activity without altering cleavage specificity. Requires Mg(2+) as cofactor.

In terms of biological role, structure-specific nuclease with 5'-flap endonuclease and 5'-3' exonuclease activities involved in DNA replication and repair. During DNA replication, cleaves the 5'-overhanging flap structure that is generated by displacement synthesis when DNA polymerase encounters the 5'-end of a downstream Okazaki fragment. Binds the unpaired 3'-DNA end and kinks the DNA to facilitate 5' cleavage specificity. Cleaves one nucleotide into the double-stranded DNA from the junction in flap DNA, leaving a nick for ligation. Also involved in the base excision repair (BER) pathway. Acts as a genome stabilization factor that prevents flaps from equilibrating into structures that lead to duplications and deletions. Also possesses 5'-3' exonuclease activity on nicked or gapped double-stranded DNA. In Methanosphaerula palustris (strain ATCC BAA-1556 / DSM 19958 / E1-9c), this protein is Flap endonuclease 1.